A 238-amino-acid polypeptide reads, in one-letter code: Cysteine-rich venom protein (238 aa).

The first 19 residues, 1–19 (MIAFIVLLSLAAVLQQSSG), serve as a signal peptide directing secretion. The propeptide occupies 20–27 (TVDFASES). An SCP domain is found at 39-164 (KKHNALRRSV…PTKYLYVCQY (126 aa)). 8 cysteine pairs are disulfide-bonded: Cys-75–Cys-153, Cys-92–Cys-165, Cys-148–Cys-162, Cys-184–Cys-191, Cys-187–Cys-196, Cys-200–Cys-233, Cys-209–Cys-227, and Cys-218–Cys-231. Residues 200–233 (CKREDDYSNCKSLAEKNKCMEEWMKSKCPASCFC) form the ShKT domain.

Belongs to the CRISP family. In terms of tissue distribution, expressed by the venom gland.

The protein resides in the secreted. Its function is as follows. Blocks olfactory (CNGA2) and retinal (CNGA1) cyclic nucleotide-gated (CNG) ion channel currents. Does not inhibit retinal (CNGA3) currents. It forms high-affinity contacts with the pore turret region and most likely inhibits CNG channel current by blocking the external entrance to the transmembrane pore. Does not affect neither depolarization- nor caffeine-induced contraction arterial smooth muscle. In Demansia vestigiata (Lesser black whip snake), this protein is Cysteine-rich venom protein.